A 168-amino-acid chain; its full sequence is Probable chemoreceptor glutamine deamidase CheD (168 aa).

Belongs to the CheD family.

It catalyses the reaction L-glutaminyl-[protein] + H2O = L-glutamyl-[protein] + NH4(+). In terms of biological role, probably deamidates glutamine residues to glutamate on methyl-accepting chemotaxis receptors (MCPs), playing an important role in chemotaxis. This chain is Probable chemoreceptor glutamine deamidase CheD, found in Pseudomonas syringae pv. tomato (strain ATCC BAA-871 / DC3000).